The chain runs to 790 residues: MSRFFVSGYNSESSSEEEDLLSSEEELLTSSGEENEDSDFFNDDDESSSDEEDGRPSGPAYFLKKSFLKGAGGDSDSDSDDEGRKVVKSAKEKLLDDMKASIEVINVNKRTNNWIVVLSEFEKLGKLINRANQQNFGTPKFYVKLLASLDDSITETVNNEKDDKTMKADEARAFNTLRQRVKKQIKEFQVYFDLYKDVPENFDQEDESLDSFAKNQETREETRTLSPIFHNLKLINESRGKKNIDKSEQVTTLEGLISDEASDFELISLYQSLLSVRFDASSNQSFMAIQDWRSNKRDLNNLLDILVKSKVYQLSEEGQTTDDIDIEPTANEDGVKVIYGSVTSLIDRLDDEFTKSLQNTDPHSMEYVERLKDETEIYNLIVRGQAYIESIVADKQQSNQLARVVLRRLEHIYYKPNQLIKANEEEAWKNIKPSTQTPSEVIESLTQFLQSNKVFAKQALLYSIYYYAVNGDYNKAKELFLSAHFNLSDSALQVSYNRALVQLGLSAFRSGAIEESHKILNEMVNSQRSKELLGQGFNSKFPNQATVVEKQRLLPFHQHINLELLECVYMTCSLLIEIPALASNKDPKRRNASLKSFKSKLEFHDRQYFTGPPESIKDHIVHASIALQKGDWSKAYNLLSSIKIWHLFPDHDNLLAMMKNQLQIEGLRTYIFTYKAVYSKLSISKLSSIFGLLQENVSEVLTQMIEKLDINGEVSGDYIVFTTDSQRSKLQELAIVMNDKIQLLTEKNEKTSSNGYAKKNQSQTQPQAQSKEVEENKFRYANVNTNTDEF.

A disordered region spans residues 1 to 62 (MSRFFVSGYN…DGRPSGPAYF (62 aa)). Acidic residues predominate over residues 14–53 (SSEEEDLLSSEEELLTSSGEENEDSDFFNDDDESSSDEED). The 173-residue stretch at 556–728 (FHQHINLELL…IVFTTDSQRS (173 aa)) folds into the PCI domain. Positions 748-790 (NEKTSSNGYAKKNQSQTQPQAQSKEVEENKFRYANVNTNTDEF) are disordered. Over residues 751-770 (TSSNGYAKKNQSQTQPQAQS) the composition is skewed to polar residues.

This sequence belongs to the eIF-3 subunit C family. Component of the eukaryotic translation initiation factor 3 (eIF-3) complex.

Its subcellular location is the cytoplasm. Component of the eukaryotic translation initiation factor 3 (eIF-3) complex, which is involved in protein synthesis of a specialized repertoire of mRNAs and, together with other initiation factors, stimulates binding of mRNA and methionyl-tRNAi to the 40S ribosome. The eIF-3 complex specifically targets and initiates translation of a subset of mRNAs involved in cell proliferation. This is Eukaryotic translation initiation factor 3 subunit C from Lodderomyces elongisporus (strain ATCC 11503 / CBS 2605 / JCM 1781 / NBRC 1676 / NRRL YB-4239) (Yeast).